The sequence spans 763 residues: Protein translocase subunit SecA 2 (763 aa).

Residues Gln-83, 101–105, and Asp-490 contribute to the ATP site; that span reads GEGKT.

This sequence belongs to the SecA family. In terms of assembly, monomer and homodimer. Part of the essential Sec protein translocation apparatus which comprises SecA, SecYEG and auxiliary proteins SecDF. Other proteins may also be involved.

It is found in the cell membrane. The protein localises to the cytoplasm. The enzyme catalyses ATP + H2O + cellular proteinSide 1 = ADP + phosphate + cellular proteinSide 2.. In terms of biological role, part of the Sec protein translocase complex. Interacts with the SecYEG preprotein conducting channel. Has a central role in coupling the hydrolysis of ATP to the transfer of proteins into and across the cell membrane, serving as an ATP-driven molecular motor driving the stepwise translocation of polypeptide chains across the membrane. This chain is Protein translocase subunit SecA 2, found in Corynebacterium glutamicum (strain ATCC 13032 / DSM 20300 / JCM 1318 / BCRC 11384 / CCUG 27702 / LMG 3730 / NBRC 12168 / NCIMB 10025 / NRRL B-2784 / 534).